We begin with the raw amino-acid sequence, 458 residues long: tRNA modification GTPase MnmE (458 aa).

Positions 26, 88, and 127 each coordinate (6S)-5-formyl-5,6,7,8-tetrahydrofolate. The 155-residue stretch at 224 to 378 folds into the TrmE-type G domain; it reads GLSTAIIGRP…IEDRINQLFF (155 aa). A K(+)-binding site is contributed by N234. GTP-binding positions include 234 to 239, 253 to 259, and 278 to 281; these read NVGKSS, TDIAGTT, and DTAG. Residue S238 participates in Mg(2+) binding. Positions 253, 255, and 258 each coordinate K(+). Residue T259 participates in Mg(2+) binding. Residue K458 coordinates (6S)-5-formyl-5,6,7,8-tetrahydrofolate.

The protein belongs to the TRAFAC class TrmE-Era-EngA-EngB-Septin-like GTPase superfamily. TrmE GTPase family. As to quaternary structure, homodimer. Heterotetramer of two MnmE and two MnmG subunits. It depends on K(+) as a cofactor.

The protein resides in the cytoplasm. Its function is as follows. Exhibits a very high intrinsic GTPase hydrolysis rate. Involved in the addition of a carboxymethylaminomethyl (cmnm) group at the wobble position (U34) of certain tRNAs, forming tRNA-cmnm(5)s(2)U34. The sequence is that of tRNA modification GTPase MnmE from Streptococcus pyogenes serotype M3 (strain ATCC BAA-595 / MGAS315).